We begin with the raw amino-acid sequence, 330 residues long: Poly(3-hydroxyalkanoate) polymerase subunit PhaE (330 aa).

Positions 298–328 form a coiled coil; it reads RSEVDEIHQTIYQLRKEVKSLKKRLGETEAN.

It belongs to the PHA/PHB synthase family. Type III PhaE subfamily. In terms of assembly, forms a heterodimer with PhaC, which may multimerize in the presence of 3-hydroxybutyryl-CoA. Both subunits are required for PHB synthesis in E.coli and in PHA-negative A.eutrophus.

The protein resides in the cytoplasm. Its pathway is biopolymer metabolism; poly-(R)-3-hydroxybutanoate biosynthesis. When expressed in E.coli with Synechocystis PhaC and C.necator PhaA and PhaB, confers the ability to synthesize up to 13% (w/w) poly(3-hydroxybutyrate) (PHB) depending on the carbon source; all 4 genes are necessary for PHB production. Cell-free in vitro coexpression with PhaE gives a heterodimer able to polymerize 3-hydroxybutyrate-CoA. This subunit has no catalytic activity but enhances the activity of PhaC, the catalytic subunit. The sequence is that of Poly(3-hydroxyalkanoate) polymerase subunit PhaE from Synechocystis sp. (strain ATCC 27184 / PCC 6803 / Kazusa).